The chain runs to 110 residues: Nucleoid-associated protein PERMA_0533 (110 aa).

The protein belongs to the YbaB/EbfC family. Homodimer.

It localises to the cytoplasm. The protein localises to the nucleoid. Its function is as follows. Binds to DNA and alters its conformation. May be involved in regulation of gene expression, nucleoid organization and DNA protection. The polypeptide is Nucleoid-associated protein PERMA_0533 (Persephonella marina (strain DSM 14350 / EX-H1)).